The primary structure comprises 625 residues: tRNA uridine 5-carboxymethylaminomethyl modification enzyme MnmG (625 aa).

13 to 18 (GGGHAG) provides a ligand contact to FAD. An NAD(+)-binding site is contributed by 273-287 (GPRYCPSIEDKVVRF).

The protein belongs to the MnmG family. Homodimer. Heterotetramer of two MnmE and two MnmG subunits. The cofactor is FAD.

The protein resides in the cytoplasm. Its function is as follows. NAD-binding protein involved in the addition of a carboxymethylaminomethyl (cmnm) group at the wobble position (U34) of certain tRNAs, forming tRNA-cmnm(5)s(2)U34. The polypeptide is tRNA uridine 5-carboxymethylaminomethyl modification enzyme MnmG (Methylococcus capsulatus (strain ATCC 33009 / NCIMB 11132 / Bath)).